The following is a 331-amino-acid chain: Phosphoribosylformylglycinamidine cyclo-ligase (331 aa).

It belongs to the AIR synthase family.

It is found in the cytoplasm. It catalyses the reaction 2-formamido-N(1)-(5-O-phospho-beta-D-ribosyl)acetamidine + ATP = 5-amino-1-(5-phospho-beta-D-ribosyl)imidazole + ADP + phosphate + H(+). The protein operates within purine metabolism; IMP biosynthesis via de novo pathway; 5-amino-1-(5-phospho-D-ribosyl)imidazole from N(2)-formyl-N(1)-(5-phospho-D-ribosyl)glycinamide: step 2/2. The chain is Phosphoribosylformylglycinamidine cyclo-ligase from Clostridium botulinum (strain Loch Maree / Type A3).